Reading from the N-terminus, the 200-residue chain is Putative 3-methyladenine DNA glycosylase (200 aa).

The protein belongs to the DNA glycosylase MPG family.

The chain is Putative 3-methyladenine DNA glycosylase from Methanocella arvoryzae (strain DSM 22066 / NBRC 105507 / MRE50).